The sequence spans 99 residues: Co-chaperonin GroES (99 aa).

Belongs to the GroES chaperonin family. Heptamer of 7 subunits arranged in a ring. Interacts with the chaperonin GroEL.

The protein resides in the cytoplasm. In terms of biological role, together with the chaperonin GroEL, plays an essential role in assisting protein folding. The GroEL-GroES system forms a nano-cage that allows encapsulation of the non-native substrate proteins and provides a physical environment optimized to promote and accelerate protein folding. GroES binds to the apical surface of the GroEL ring, thereby capping the opening of the GroEL channel. In Corynebacterium efficiens (strain DSM 44549 / YS-314 / AJ 12310 / JCM 11189 / NBRC 100395), this protein is Co-chaperonin GroES.